We begin with the raw amino-acid sequence, 497 residues long: Glycerol kinase (497 aa).

Thr13 serves as a coordination point for ADP. Residues Thr13, Thr14, and Ser15 each coordinate ATP. Thr13 contacts sn-glycerol 3-phosphate. ADP is bound at residue Arg17. Sn-glycerol 3-phosphate is bound by residues Arg83, Glu84, and Tyr135. Positions 83, 84, and 135 each coordinate glycerol. The residue at position 231 (His231) is a Phosphohistidine; by HPr. Position 245 (Asp245) interacts with sn-glycerol 3-phosphate. Glycerol-binding residues include Asp245 and Gln246. ADP-binding residues include Thr267 and Gly310. Positions 267, 310, 314, and 411 each coordinate ATP. The ADP site is built by Gly411 and Asn415.

It belongs to the FGGY kinase family. In terms of assembly, homotetramer and homodimer (in equilibrium). Post-translationally, the phosphoenolpyruvate-dependent sugar phosphotransferase system (PTS), including enzyme I, and histidine-containing protein (HPr) are required for the phosphorylation, which leads to the activation of the enzyme.

It carries out the reaction glycerol + ATP = sn-glycerol 3-phosphate + ADP + H(+). Its pathway is polyol metabolism; glycerol degradation via glycerol kinase pathway; sn-glycerol 3-phosphate from glycerol: step 1/1. Activated by phosphorylation and inhibited by fructose 1,6-bisphosphate (FBP). In terms of biological role, key enzyme in the regulation of glycerol uptake and metabolism. Catalyzes the phosphorylation of glycerol to yield sn-glycerol 3-phosphate. In Listeria monocytogenes serovar 1/2a (strain ATCC BAA-679 / EGD-e), this protein is Glycerol kinase.